Here is a 253-residue protein sequence, read N- to C-terminus: MVKIFIDPGHGGSDTGASANGLQEKQLTLQTALALRNMLLNEYQNVSVLLSRTSDQTVSLTQRTNAANSWGADYFLSIHMNAGGGTGFEDYIYPGVGAPTTTYRDIMHEEILKVVDFRDRGKKTANFHVLRETAMPALLTENGFVDNTNDAEKLKSSAFIQSIARGHANGLARAFNLSKNAAALYKVQIAAFRTKANADSLAAQAEAKGFDALVIYRDSLYKVQIGAFSSKENAEALVQQAKNAEFDTFIYQE.

The region spanning 4-172 is the MurNAc-LAA domain; the sequence is IFIDPGHGGS…IARGHANGLA (169 aa). The SPOR domain occupies 179–253; sequence KNAAALYKVQ…AEFDTFIYQE (75 aa). Tandem repeats lie at residues 184–219 and 220–253. Positions 184–253 are 2 X 35 AA approximate tandem repeats; it reads LYKVQIAAFR…AEFDTFIYQE (70 aa).

Belongs to the N-acetylmuramoyl-L-alanine amidase 3 family.

It is found in the secreted. The enzyme catalyses Hydrolyzes the link between N-acetylmuramoyl residues and L-amino acid residues in certain cell-wall glycopeptides.. In terms of biological role, hydrolyzes the cell wall of M.luteus more efficiently than that of B.licheniformis and B.subtilis. The C-terminal region, including the repeats, determines substrate specificity. The chain is N-acetylmuramoyl-L-alanine amidase CwlM (cwlM) from Bacillus licheniformis.